A 205-amino-acid polypeptide reads, in one-letter code: Proteasome subunit beta type-3 (205 aa).

Residue Ser2 is modified to N-acetylserine. An N6-acetyllysine modification is found at Lys77.

Belongs to the peptidase T1B family. The 26S proteasome consists of a 20S proteasome core and two 19S regulatory subunits. The 20S proteasome core is a barrel-shaped complex made of 28 subunits that are arranged in four stacked rings. The two outer rings are each formed by seven alpha subunits, and the two inner rings are formed by seven beta subunits. The proteolytic activity is exerted by three beta-subunits PSMB5, PSMB6 and PSMB7. As to quaternary structure, (Microbial infection) Interacts with HIV-1 TAT protein.

The protein resides in the cytoplasm. Its subcellular location is the nucleus. Non-catalytic component of the 20S core proteasome complex involved in the proteolytic degradation of most intracellular proteins. This complex plays numerous essential roles within the cell by associating with different regulatory particles. Associated with two 19S regulatory particles, forms the 26S proteasome and thus participates in the ATP-dependent degradation of ubiquitinated proteins. The 26S proteasome plays a key role in the maintenance of protein homeostasis by removing misfolded or damaged proteins that could impair cellular functions, and by removing proteins whose functions are no longer required. Associated with the PA200 or PA28, the 20S proteasome mediates ubiquitin-independent protein degradation. This type of proteolysis is required in several pathways including spermatogenesis (20S-PA200 complex) or generation of a subset of MHC class I-presented antigenic peptides (20S-PA28 complex). This chain is Proteasome subunit beta type-3, found in Homo sapiens (Human).